We begin with the raw amino-acid sequence, 582 residues long: ATP-dependent lipid A-core flippase (582 aa).

A run of 5 helical transmembrane segments spans residues 16 to 36 (LWPM…ALIL), 63 to 83 (ILVW…VSGF), 153 to 173 (IIGL…ILVV), 253 to 273 (PLIQ…ASFP), and 275 to 295 (VMET…IALM). The ABC transmembrane type-1 domain maps to 28-310 (IVAAIALILN…LTNVNAQFQR (283 aa)). In terms of domain architecture, ABC transporter spans 342 to 578 (IAFDHVTFSY…QGVYAQLHQL (237 aa)). 376–383 (GRSGSGKS) provides a ligand contact to ATP.

This sequence belongs to the ABC transporter superfamily. Lipid exporter (TC 3.A.1.106) family. As to quaternary structure, homodimer.

The protein resides in the cell inner membrane. It carries out the reaction ATP + H2O + lipid A-core oligosaccharideSide 1 = ADP + phosphate + lipid A-core oligosaccharideSide 2.. In terms of biological role, involved in lipopolysaccharide (LPS) biosynthesis. Translocates lipid A-core from the inner to the outer leaflet of the inner membrane. Transmembrane domains (TMD) form a pore in the inner membrane and the ATP-binding domain (NBD) is responsible for energy generation. This is ATP-dependent lipid A-core flippase from Sodalis glossinidius (strain morsitans).